The sequence spans 828 residues: Leucine--tRNA ligase (828 aa).

The 'HIGH' region signature appears at 42–52 (PYPSGTLHVGH). The 'KMSKS' region motif lies at 582 to 586 (KMSKS). K585 contacts ATP.

The protein belongs to the class-I aminoacyl-tRNA synthetase family.

The protein localises to the cytoplasm. The enzyme catalyses tRNA(Leu) + L-leucine + ATP = L-leucyl-tRNA(Leu) + AMP + diphosphate. This is Leucine--tRNA ligase from Petrotoga mobilis (strain DSM 10674 / SJ95).